The primary structure comprises 396 residues: Obg-like ATPase 1 (396 aa).

Residues 23 to 283 (LKIGIVGLPN…LSAEERQKYL (261 aa)) form the OBG-type G domain. Residue 32-37 (NVGKST) coordinates ATP. Positions 36 and 56 each coordinate Mg(2+). Position 231 (Leu231) interacts with ATP. A Nuclear export signal motif is present at residues 267–274 (LELKLQEL). Lys294 is subject to N6-acetyllysine. The TGS domain maps to 304–387 (QLEYFFTAGP…EDGDIIFFKF (84 aa)).

The protein belongs to the TRAFAC class OBG-HflX-like GTPase superfamily. OBG GTPase family. YchF/OLA1 subfamily. In terms of assembly, monomer. Requires Mg(2+) as cofactor.

It localises to the cytoplasm. The protein resides in the nucleus. Its subcellular location is the nucleolus. Hydrolyzes ATP, and can also hydrolyze GTP with lower efficiency. Has lower affinity for GTP. The sequence is that of Obg-like ATPase 1 from Pongo abelii (Sumatran orangutan).